The following is a 566-amino-acid chain: SRSF protein kinase 3 (566 aa).

A compositionally biased stretch (gly residues) spans methionine 1–serine 13. Residues methionine 1–aspartate 60 form a disordered region. The span at glycine 14–glycine 26 shows a compositional bias: low complexity. At serine 50 the chain carries Phosphoserine. A Protein kinase domain is found at tyrosine 79 to leucine 564. ATP contacts are provided by residues leucine 85–valine 93 and lysine 108. The active-site Proton acceptor is aspartate 212. Residues glutamate 236–proline 254 show a composition bias toward polar residues. 2 disordered regions span residues glutamate 236–glutamate 283 and glutamate 295–serine 353. The span at serine 263–lysine 278 shows a compositional bias: basic residues. Residue serine 329 is modified to Phosphoserine. Residues proline 330 to glycine 339 are compositionally biased toward low complexity. Residues serine 344 to serine 353 show a composition bias toward polar residues.

This sequence belongs to the protein kinase superfamily. In terms of tissue distribution, highly expressed in skeletal muscle, heart, uterus and parorchis. Weakly expressed in brain, stomach, small intestine and ovary.

It localises to the nucleus. Its subcellular location is the cytoplasm. It carries out the reaction L-seryl-[protein] + ATP = O-phospho-L-seryl-[protein] + ADP + H(+). The catalysed reaction is L-threonyl-[protein] + ATP = O-phospho-L-threonyl-[protein] + ADP + H(+). Serine/arginine-rich protein-specific kinase which specifically phosphorylates its substrates at serine residues located in regions rich in arginine/serine dipeptides, known as RS domains. Phosphorylates the SR splicing factor SRSF1 and the lamin-B receptor (LBR) in vitro. Required for normal muscle development. This Sus scrofa (Pig) protein is SRSF protein kinase 3 (SRPK3).